A 427-amino-acid polypeptide reads, in one-letter code: Phosphoribosylamine--glycine ligase (427 aa).

An ATP-grasp domain is found at 110-315 (KDFCQRHGLP…IVPILLAAAK (206 aa)). 136 to 196 (LDTLEAPFVI…EEFMHGEEAS (61 aa)) serves as a coordination point for ATP. Residues Glu285 and Asn287 each coordinate Mg(2+).

Belongs to the GARS family. It depends on Mg(2+) as a cofactor. The cofactor is Mn(2+).

The catalysed reaction is 5-phospho-beta-D-ribosylamine + glycine + ATP = N(1)-(5-phospho-beta-D-ribosyl)glycinamide + ADP + phosphate + H(+). The protein operates within purine metabolism; IMP biosynthesis via de novo pathway; N(1)-(5-phospho-D-ribosyl)glycinamide from 5-phospho-alpha-D-ribose 1-diphosphate: step 2/2. In Caulobacter vibrioides (strain ATCC 19089 / CIP 103742 / CB 15) (Caulobacter crescentus), this protein is Phosphoribosylamine--glycine ligase.